Reading from the N-terminus, the 296-residue chain is Tyrosine recombinase XerC (296 aa).

The 84-residue stretch at 1 to 84 (MEKIQQAYLY…TLRSFYEYWM (84 aa)) folds into the Core-binding (CB) domain. Residues 105–286 (YLPHFFYEEE…TNEQLRKVYL (182 aa)) form the Tyr recombinase domain. Residues arginine 145, lysine 169, histidine 238, arginine 241, and histidine 264 contribute to the active site. The active-site O-(3'-phospho-DNA)-tyrosine intermediate is tyrosine 273.

The protein belongs to the 'phage' integrase family. XerC subfamily. Forms a cyclic heterotetrameric complex composed of two molecules of XerC and two molecules of XerD.

The protein resides in the cytoplasm. Functionally, site-specific tyrosine recombinase, which acts by catalyzing the cutting and rejoining of the recombining DNA molecules. The XerC-XerD complex is essential to convert dimers of the bacterial chromosome into monomers to permit their segregation at cell division. It also contributes to the segregational stability of plasmids. The sequence is that of Tyrosine recombinase XerC from Staphylococcus saprophyticus subsp. saprophyticus (strain ATCC 15305 / DSM 20229 / NCIMB 8711 / NCTC 7292 / S-41).